Reading from the N-terminus, the 495-residue chain is GTPase Der (495 aa).

The region spanning 3–178 (AKIALVGRPN…EMRDLLPEED (176 aa)) is the EngA-type G 1 domain. Residues 9 to 16 (GRPNVGKS), 57 to 61 (DTGGI), and 130 to 133 (NKVD) contribute to the GTP site. The interval 190–227 (TAVASADADVDADVETEGGTSASETEEGITEETVEDEP) is disordered. A compositionally biased stretch (acidic residues) spans 213–227 (ETEEGITEETVEDEP). The EngA-type G 2 domain maps to 231-404 (LRLCMLGRPN…LAARIRRECS (174 aa)). GTP contacts are provided by residues 237–244 (GRPNAGKS), 284–288 (DTAGV), and 349–352 (NKMD). A KH-like domain is found at 405–489 (VRIPTGQLNR…PMRVHFRSSH (85 aa)).

Belongs to the TRAFAC class TrmE-Era-EngA-EngB-Septin-like GTPase superfamily. EngA (Der) GTPase family. In terms of assembly, associates with the 50S ribosomal subunit.

Functionally, GTPase that plays an essential role in the late steps of ribosome biogenesis. This Nitratidesulfovibrio vulgaris (strain DP4) (Desulfovibrio vulgaris) protein is GTPase Der.